A 623-amino-acid chain; its full sequence is Alpha-1,2-mannosyltransferase Alg9 (623 aa).

8 consecutive transmembrane segments (helical) span residues 152–172, 193–223, 229–254, 266–284, 326–348, 360–378, 390–410, and 431–452; these read LIFYMVRCMLGFGCAVMERYM, LFSVGMFVSSTALLPSSFSMYFGCAALAAWW, FAIFLTAISALLGWPFAALIGIPLVL, FVQWTLISGATVAIPMIAI, FLNFNIIWLLALQLPIMLVIDYL, FPHYISLAPLYLWLLVFFA, IYPLISLCGAITVDVYQRIFF, and FIAILVMVTSTLLGLSRVFALY.

Belongs to the glycosyltransferase 22 family.

It localises to the endoplasmic reticulum membrane. It catalyses the reaction an alpha-D-Man-(1-&gt;2)-alpha-D-Man-(1-&gt;2)-alpha-D-Man-(1-&gt;3)-[alpha-D-Man-(1-&gt;3)-alpha-D-Man-(1-&gt;6)]-beta-D-Man-(1-&gt;4)-beta-D-GlcNAc-(1-&gt;4)-alpha-D-GlcNAc-diphospho-di-trans,poly-cis-dolichol + a di-trans,poly-cis-dolichyl beta-D-mannosyl phosphate = an alpha-D-Man-(1-&gt;2)-alpha-D-Man-(1-&gt;2)-alpha-D-Man-(1-&gt;3)-[alpha-D-Man-(1-&gt;2)-alpha-D-Man-(1-&gt;3)-alpha-D-Man-(1-&gt;6)]-beta-D-Man-(1-&gt;4)-beta-D-GlcNAc-(1-&gt;4)-alpha-D-GlcNAc-diphospho-di-trans,poly-cis-dolichol + a di-trans,poly-cis-dolichyl phosphate + H(+). It carries out the reaction an alpha-D-Man-(1-&gt;2)-alpha-D-Man-(1-&gt;2)-alpha-D-Man-(1-&gt;3)-[alpha-D-Man-(1-&gt;2)-alpha-D-Man-(1-&gt;3)-[alpha-D-Man-(1-&gt;6)]-alpha-D-Man-(1-&gt;6)]-beta-D-Man-(1-&gt;4)-beta-D-GlcNAc-(1-&gt;4)-alpha-D-GlcNAc-diphospho-di-trans,poly-cis-dolichol + a di-trans,poly-cis-dolichyl beta-D-mannosyl phosphate = an alpha-D-Man-(1-&gt;2)-alpha-D-Man-(1-&gt;2)-alpha-D-Man-(1-&gt;3)-[alpha-D-Man-(1-&gt;2)-alpha-D-Man-(1-&gt;3)-[alpha-D-Man-(1-&gt;2)-alpha-D-Man-(1-&gt;6)]-alpha-D-Man-(1-&gt;6)]-beta-D-Man-(1-&gt;4)-beta-D-GlcNAc-(1-&gt;4)-alpha-D-GlcNAc-diphospho-di-trans,poly-cis-dolichol + a di-trans,poly-cis-dolichyl phosphate + H(+). Its pathway is protein modification; protein glycosylation. In terms of biological role, probable alpha-1,2-mannosyltransferase involved in the N-glycosylation pathway. Probably involved in glycosylation of the TNF receptor grnd, regulating its ligand affinity. Required for normal epithelial growth and architecture. Suppressor of JNK-dependent intestinal stem cell proliferation. This is Alpha-1,2-mannosyltransferase Alg9 from Drosophila melanogaster (Fruit fly).